The primary structure comprises 37 residues: Large ribosomal subunit protein bL36 (37 aa).

The protein belongs to the bacterial ribosomal protein bL36 family.

This chain is Large ribosomal subunit protein bL36, found in Ureaplasma urealyticum serovar 10 (strain ATCC 33699 / Western).